We begin with the raw amino-acid sequence, 407 residues long: Substance-P receptor (407 aa).

Residues 1-31 lie on the Extracellular side of the membrane; it reads MDNVLQVDSDLFPNISTNTSEPNQFVQPAWQ. N-linked (GlcNAc...) asparagine glycans are attached at residues Asn-14 and Asn-18. The helical transmembrane segment at 32-54 threads the bilayer; the sequence is IVLWAAAYTVIVVTSVVGNVVVM. Residues 55 to 64 lie on the Cytoplasmic side of the membrane; that stretch reads WIILAHKRMR. A helical membrane pass occupies residues 65–86; the sequence is TVTNYFLVNLAFAEASMAAFNT. Topologically, residues 87–106 are extracellular; sequence VVNFTYAVHNEWYYGLFYCK. Residues Cys-105 and Cys-180 are joined by a disulfide bond. The chain crosses the membrane as a helical span at residues 107 to 128; the sequence is FHNFFPIAAVFASIYSMTAVAF. The Cytoplasmic portion of the chain corresponds to 129-148; it reads DRYMAIIHPLQPRLSATATK. The chain crosses the membrane as a helical span at residues 149 to 169; that stretch reads VVICVIWVLALLLAFPQGYYS. At 170–194 the chain is on the extracellular side; sequence TTETMPNRVVCMIEWPEHPNKIYEK. A helical transmembrane segment spans residues 195–219; it reads VYHICVTVLIYFLPLLVIGYAYTVV. At 220–248 the chain is on the cytoplasmic side; sequence GITLWASEIPGDSSDRYHEQVSAKRKVVK. Residues 249–270 traverse the membrane as a helical segment; that stretch reads MMIVVVCTFAICWLPFHIFFLL. Residues 271-283 lie on the Extracellular side of the membrane; it reads PYINPDLYLEKFI. Residues 284–308 traverse the membrane as a helical segment; sequence QQVYLAIMWLAMSSTMYNPIIYCCL. Topologically, residues 309 to 407 are cytoplasmic; sequence NDRFRLGFKH…SFSFYSNMLS (99 aa). Cys-322 is lipidated: S-palmitoyl cysteine. The disordered stretch occupies residues 365-394; that stretch reads HEEELEDGPKTTPSSLDLTSNGSSRSDSKT. Over residues 375–394 the composition is skewed to polar residues; it reads TTPSSLDLTSNGSSRSDSKT.

It belongs to the G-protein coupled receptor 1 family. Interacts with ARRB1.

The protein localises to the cell membrane. Functionally, this is a receptor for the tachykinin neuropeptide substance P. It is probably associated with G proteins that activate a phosphatidylinositol-calcium second messenger system. The sequence is that of Substance-P receptor (TACR1) from Canis lupus familiaris (Dog).